Consider the following 195-residue polypeptide: Protein lin-28 homolog A (195 aa).

The CSD domain maps to 33 to 106 (QGSGVCKWFN…GLESTQVTGP (74 aa)). Residues 98-127 (LESTQVTGPGGAPCIGSERRPKVKGQQKRR) form a disordered region. The interval 107-130 (GGAPCIGSERRPKVKGQQKRRQRG) is flexible linker. The span at 118–127 (PKVKGQQKRR) shows a compositional bias: basic residues. CCHC-type zinc fingers lie at residues 131 to 148 (DRCY…ECKL) and 153 to 170 (KKCH…QCPE). Residues Cys-133, Cys-136, His-141, Cys-146, Cys-155, Cys-158, His-163, and Cys-168 each contribute to the Zn(2+) site.

This sequence belongs to the lin-28 family. In terms of assembly, monomer.

It localises to the cytoplasm. The protein resides in the rough endoplasmic reticulum. Its subcellular location is the P-body. The protein localises to the stress granule. It is found in the nucleus. It localises to the nucleolus. RNA-binding protein that inhibits processing of pre-let-7 miRNAs and regulates translation of mRNAs that control developmental timing, pluripotency and metabolism. Seems to recognize a common structural G-quartet (G4) feature in its miRNA and mRNA targets. 'Translational enhancer' that drives specific mRNAs to polysomes and increases the efficiency of protein synthesis. Its association with the translational machinery and target mRNAs results in an increased number of initiation events per molecule of mRNA and, indirectly, in mRNA stabilization. Suppressor of microRNA (miRNA) biogenesis, including that of let-7. Binds specific target miRNA precursors (pre-miRNAs), recognizing an 5'-GGAG-3' motif found in their terminal loop, and recruits uridylyltransferase. This results in the terminal uridylation of target pre-miRNAs. Uridylated pre-miRNAs fail to be processed by Dicer and undergo degradation. Localized to the periendoplasmic reticulum area, binds to a large number of spliced mRNAs and inhibits the translation of mRNAs destined for the ER, reducing the synthesis of transmembrane proteins, ER or Golgi lumen proteins, and secretory proteins. Binds to and enhances the translation of mRNAs for several metabolic enzymes, increasing glycolysis and oxidative phosphorylation. Which, with the let-7 repression may enhance tissue repair in adult tissue. The protein is Protein lin-28 homolog A (lin28a) of Xenopus laevis (African clawed frog).